Consider the following 262-residue polypeptide: Small ribosomal subunit protein uS2 (262 aa).

Residues 236 to 262 (AGGAAEAPAAEDVQTEEAAAPEADSAE) are disordered.

The protein belongs to the universal ribosomal protein uS2 family.

This is Small ribosomal subunit protein uS2 from Psychrobacter sp. (strain PRwf-1).